Consider the following 66-residue polypeptide: ATP synthase F(0) complex subunit 8 (66 aa).

The chain crosses the membrane as a helical span at residues Thr8–Phe24. Lys54 is subject to N6-acetyllysine; alternate. Lys54 is modified (N6-succinyllysine; alternate). Residue Lys57 is modified to N6-acetyllysine.

It belongs to the ATPase protein 8 family. As to quaternary structure, component of the ATP synthase complex composed at least of ATP5F1A/subunit alpha, ATP5F1B/subunit beta, ATP5MC1/subunit c (homooctomer), MT-ATP6/subunit a, MT-ATP8/subunit 8, ATP5ME/subunit e, ATP5MF/subunit f, ATP5MG/subunit g, ATP5MK/subunit k, ATP5MJ/subunit j, ATP5F1C/subunit gamma, ATP5F1D/subunit delta, ATP5F1E/subunit epsilon, ATP5PF/subunit F6, ATP5PB/subunit b, ATP5PD/subunit d, ATP5PO/subunit OSCP. ATP synthase complex consists of a soluble F(1) head domain (subunits alpha(3) and beta(3)) - the catalytic core - and a membrane F(0) domain - the membrane proton channel (subunits c, a, 8, e, f, g, k and j). These two domains are linked by a central stalk (subunits gamma, delta, and epsilon) rotating inside the F1 region and a stationary peripheral stalk (subunits F6, b, d, and OSCP). Interacts with PRICKLE3.

Its subcellular location is the mitochondrion membrane. Functionally, subunit 8, of the mitochondrial membrane ATP synthase complex (F(1)F(0) ATP synthase or Complex V) that produces ATP from ADP in the presence of a proton gradient across the membrane which is generated by electron transport complexes of the respiratory chain. ATP synthase complex consist of a soluble F(1) head domain - the catalytic core - and a membrane F(1) domain - the membrane proton channel. These two domains are linked by a central stalk rotating inside the F(1) region and a stationary peripheral stalk. During catalysis, ATP synthesis in the catalytic domain of F(1) is coupled via a rotary mechanism of the central stalk subunits to proton translocation. In vivo, can only synthesize ATP although its ATP hydrolase activity can be activated artificially in vitro. Part of the complex F(0) domain. In Bos mutus grunniens (Wild yak), this protein is ATP synthase F(0) complex subunit 8.